A 447-amino-acid chain; its full sequence is Bifunctional protein GlmU (447 aa).

The pyrophosphorylase stretch occupies residues 1 to 225 (MLTVAILAAG…NGELQGINNR (225 aa)). UDP-N-acetyl-alpha-D-glucosamine is bound by residues 7–10 (LAAG), Lys-21, Gln-73, and 78–79 (GT). A Mg(2+)-binding site is contributed by Asp-103. UDP-N-acetyl-alpha-D-glucosamine is bound by residues Gly-140, Glu-154, Asn-169, and Asn-223. Residue Asn-223 coordinates Mg(2+). Positions 226-246 (VQLSKCEETIQNLIKEKHMLG) are linker. Positions 247 to 447 (GVTFINPASC…QVNIENWKKN (201 aa)) are N-acetyltransferase. Arg-328 and Lys-346 together coordinate UDP-N-acetyl-alpha-D-glucosamine. His-358 serves as the catalytic Proton acceptor. Positions 361 and 372 each coordinate UDP-N-acetyl-alpha-D-glucosamine. Acetyl-CoA is bound by residues Ala-375, Ala-418, and Arg-435.

This sequence in the N-terminal section; belongs to the N-acetylglucosamine-1-phosphate uridyltransferase family. In the C-terminal section; belongs to the transferase hexapeptide repeat family. Homotrimer. Mg(2+) serves as cofactor.

The protein resides in the cytoplasm. It carries out the reaction alpha-D-glucosamine 1-phosphate + acetyl-CoA = N-acetyl-alpha-D-glucosamine 1-phosphate + CoA + H(+). The enzyme catalyses N-acetyl-alpha-D-glucosamine 1-phosphate + UTP + H(+) = UDP-N-acetyl-alpha-D-glucosamine + diphosphate. Its pathway is nucleotide-sugar biosynthesis; UDP-N-acetyl-alpha-D-glucosamine biosynthesis; N-acetyl-alpha-D-glucosamine 1-phosphate from alpha-D-glucosamine 6-phosphate (route II): step 2/2. It participates in nucleotide-sugar biosynthesis; UDP-N-acetyl-alpha-D-glucosamine biosynthesis; UDP-N-acetyl-alpha-D-glucosamine from N-acetyl-alpha-D-glucosamine 1-phosphate: step 1/1. The protein operates within bacterial outer membrane biogenesis; LPS lipid A biosynthesis. Functionally, catalyzes the last two sequential reactions in the de novo biosynthetic pathway for UDP-N-acetylglucosamine (UDP-GlcNAc). The C-terminal domain catalyzes the transfer of acetyl group from acetyl coenzyme A to glucosamine-1-phosphate (GlcN-1-P) to produce N-acetylglucosamine-1-phosphate (GlcNAc-1-P), which is converted into UDP-GlcNAc by the transfer of uridine 5-monophosphate (from uridine 5-triphosphate), a reaction catalyzed by the N-terminal domain. This is Bifunctional protein GlmU from Prochlorococcus marinus (strain MIT 9515).